Here is a 1085-residue protein sequence, read N- to C-terminus: SLIT-ROBO Rho GTPase-activating protein 1 (1085 aa).

Residues 19 to 314 form the F-BAR domain; that stretch reads SQVKEIRAQL…AVDNLEPRSD (296 aa). A coiled-coil region spans residues 351 to 390; it reads VQAELMLRYQQLQSRLATLKIENEEVKKTTEATLQTIQDM. Residue S416 is modified to Phosphoserine. The segment at 475 to 496 is disordered; that stretch reads YMTTRPPNVPPKPQKHRKSRPR. Residues 506-694 enclose the Rho-GAP domain; sequence GDLETFVKDS…TIIIHHETIF (189 aa). The SH3 domain occupies 743–802; sequence CEPIEAIAKFDYVGRSARELSFKKGASLLLYHRASEDWWEGRHNGIDGLVPHQYIVVQDM. Residues 808–822 show a composition bias toward polar residues; the sequence is DTLSQKADSEASSGP. The segment at 808–954 is disordered; it reads DTLSQKADSE…TGFNDHKPLD (147 aa). Phosphoserine is present on residues S835 and S917. Basic and acidic residues predominate over residues 922-931; the sequence is SRHDSLKKID. Position 932 is a phosphoserine (S932). Positions 937–946 are enriched in polar residues; that stretch reads RSTSSGQYTG. A coiled-coil region spans residues 956-985; that stretch reads ETIAQDIEETMNTALNELRELERQSTAKHA. A compositionally biased stretch (polar residues) spans 997 to 1011; the sequence is KNSPTPATSTESLSP. 2 disordered regions span residues 997 to 1038 and 1051 to 1085; these read KNSP…MSTF and KPPA…SCTM. S999 carries the post-translational modification Phosphoserine. T1001 carries the post-translational modification Phosphothreonine. A compositionally biased stretch (low complexity) spans 1027–1037; that stretch reads STSSSSDTMST. S1032 carries the post-translational modification Phosphoserine.

In terms of assembly, homodimer. Forms a heterooligomer with SRGAP2 and SRGAP3 through its F-BAR domain. Interacts with ROBO1, CDC42 and RHOA. Interacts with FASLG. As to expression, expressed in brain, lung, kidney, and testis.

Its function is as follows. GTPase-activating protein for RhoA and Cdc42 small GTPases. Together with CDC42 seems to be involved in the pathway mediating the repulsive signaling of Robo and Slit proteins in neuronal migration. SLIT2, probably through interaction with ROBO1, increases the interaction of SRGAP1 with ROBO1 and inactivates CDC42. In Homo sapiens (Human), this protein is SLIT-ROBO Rho GTPase-activating protein 1 (SRGAP1).